We begin with the raw amino-acid sequence, 163 residues long: Nucleotide-binding protein HDEF_1968 (163 aa).

The protein belongs to the YajQ family.

In terms of biological role, nucleotide-binding protein. The chain is Nucleotide-binding protein HDEF_1968 from Hamiltonella defensa subsp. Acyrthosiphon pisum (strain 5AT).